The following is a 230-amino-acid chain: uncharacterized protein (230 aa).

NADP(+) is bound at residue 10-34 (VVTGASSGIGEAIAKKLSQQGASIV). Serine 139 contacts substrate. The Proton acceptor role is filled by tyrosine 152.

This sequence belongs to the short-chain dehydrogenases/reductases (SDR) family.

This is an uncharacterized protein from Staphylococcus epidermidis (strain ATCC 12228 / FDA PCI 1200).